The primary structure comprises 195 residues: Probable GTP-binding protein EngB (195 aa).

The EngB-type G domain occupies 22 to 195; it reads GLPEIALAGR…WGAIKKMINR (174 aa). Residues 30 to 37, 57 to 61, 75 to 78, 142 to 145, and 174 to 176 contribute to the GTP site; these read GRSNVGKS, GKTQT, DVPG, TKAD, and FSS. Residues Ser-37 and Thr-59 each contribute to the Mg(2+) site.

Belongs to the TRAFAC class TrmE-Era-EngA-EngB-Septin-like GTPase superfamily. EngB GTPase family. Requires Mg(2+) as cofactor.

Its function is as follows. Necessary for normal cell division and for the maintenance of normal septation. In terms of biological role, binds GTP and GDP. In Bacillus subtilis (strain 168), this protein is Probable GTP-binding protein EngB.